A 263-amino-acid polypeptide reads, in one-letter code: Peptidoglycan-N-acetylmuramic acid deacetylase PdaA (263 aa).

A signal peptide spans 1–23 (MKWMCSICCAAVLLAGGAAQAEA). The region spanning 66 to 247 (KTIYLTFDNG…DLKKQGYTFK (182 aa)) is the NodB homology domain. Residue Asp73 is the Proton acceptor of the active site. Residues His124 and His128 each coordinate a divalent metal cation. The active-site Proton donor is His222.

The protein belongs to the polysaccharide deacetylase family.

In terms of biological role, catalyzes the deacetylation of N-acetylmuramic acid (MurNAc) residues in glycan strands of peptidoglycan, leading to the formation of muramic delta-lactam residues in spore cortex, after transpeptidation of deacetylated muramic acid residues. PdaA probably carries out both deacetylation and lactam ring formation and requires the product of CwlD activity on peptidoglycan as a substrate. Is required for germination. Cannot use chitin oligomer (hexa-N-acetylchitohexaose) as a substrate. This chain is Peptidoglycan-N-acetylmuramic acid deacetylase PdaA (pdaA), found in Bacillus subtilis (strain 168).